Reading from the N-terminus, the 542-residue chain is Protein MPA43 (542 aa).

The sequence is that of Protein MPA43 (MPA43) from Saccharomyces cerevisiae (strain ATCC 204508 / S288c) (Baker's yeast).